Reading from the N-terminus, the 169-residue chain is Putative tRNA (cytidine(34)-2'-O)-methyltransferase (169 aa).

The S-adenosyl-L-methionine site is built by Val79, Gly104, Ile125, and Ser134.

This sequence belongs to the class IV-like SAM-binding methyltransferase superfamily. RNA methyltransferase TrmH family. TrmL subfamily.

It is found in the cytoplasm. The catalysed reaction is cytidine(34) in tRNA + S-adenosyl-L-methionine = 2'-O-methylcytidine(34) in tRNA + S-adenosyl-L-homocysteine + H(+). It carries out the reaction 5-carboxymethylaminomethyluridine(34) in tRNA(Leu) + S-adenosyl-L-methionine = 5-carboxymethylaminomethyl-2'-O-methyluridine(34) in tRNA(Leu) + S-adenosyl-L-homocysteine + H(+). In terms of biological role, could methylate the ribose at the nucleotide 34 wobble position in tRNA. In Lactococcus lactis subsp. cremoris (strain MG1363), this protein is Putative tRNA (cytidine(34)-2'-O)-methyltransferase.